Consider the following 218-residue polypeptide: Elongation factor Ts (218 aa).

An involved in Mg(2+) ion dislocation from EF-Tu region spans residues 82-85 (TDFV).

This sequence belongs to the EF-Ts family.

Its subcellular location is the cytoplasm. In terms of biological role, associates with the EF-Tu.GDP complex and induces the exchange of GDP to GTP. It remains bound to the aminoacyl-tRNA.EF-Tu.GTP complex up to the GTP hydrolysis stage on the ribosome. In Prochlorococcus marinus (strain NATL2A), this protein is Elongation factor Ts.